The primary structure comprises 170 residues: Phosphopantetheine adenylyltransferase (170 aa).

T10 contributes to the substrate binding site. Residues T10–F11 and H18 contribute to the ATP site. Substrate-binding residues include K42, V79, and R93. ATP is bound by residues G94–R96, E104, and T129–T135.

This sequence belongs to the bacterial CoaD family. In terms of assembly, homohexamer. It depends on Mg(2+) as a cofactor.

The protein resides in the cytoplasm. The enzyme catalyses (R)-4'-phosphopantetheine + ATP + H(+) = 3'-dephospho-CoA + diphosphate. Its pathway is cofactor biosynthesis; coenzyme A biosynthesis; CoA from (R)-pantothenate: step 4/5. Its function is as follows. Reversibly transfers an adenylyl group from ATP to 4'-phosphopantetheine, yielding dephospho-CoA (dPCoA) and pyrophosphate. In Parvibaculum lavamentivorans (strain DS-1 / DSM 13023 / NCIMB 13966), this protein is Phosphopantetheine adenylyltransferase.